The primary structure comprises 328 residues: Fructokinase-2 (328 aa).

This sequence belongs to the carbohydrate kinase PfkB family.

The catalysed reaction is D-fructose + ATP = D-fructose 6-phosphate + ADP + H(+). Its pathway is glycan biosynthesis; starch biosynthesis. Functionally, may play an important role in maintaining the flux of carbon towards starch formation. The polypeptide is Fructokinase-2 (FRK2) (Solanum habrochaites (Wild tomato)).